A 425-amino-acid polypeptide reads, in one-letter code: Gamma-glutamyl phosphate reductase (425 aa).

The protein belongs to the gamma-glutamyl phosphate reductase family.

Its subcellular location is the cytoplasm. It carries out the reaction L-glutamate 5-semialdehyde + phosphate + NADP(+) = L-glutamyl 5-phosphate + NADPH + H(+). It functions in the pathway amino-acid biosynthesis; L-proline biosynthesis; L-glutamate 5-semialdehyde from L-glutamate: step 2/2. Catalyzes the NADPH-dependent reduction of L-glutamate 5-phosphate into L-glutamate 5-semialdehyde and phosphate. The product spontaneously undergoes cyclization to form 1-pyrroline-5-carboxylate. This chain is Gamma-glutamyl phosphate reductase, found in Novosphingobium aromaticivorans (strain ATCC 700278 / DSM 12444 / CCUG 56034 / CIP 105152 / NBRC 16084 / F199).